The sequence spans 152 residues: Protein SprT-like (152 aa).

In terms of domain architecture, SprT-like spans 7–147; sequence QRLVEEVSLQ…CGKCKGKLKP (141 aa). His67 provides a ligand contact to Zn(2+). The active site involves Glu68. His71 provides a ligand contact to Zn(2+).

Belongs to the SprT family. It depends on Zn(2+) as a cofactor.

It is found in the cytoplasm. The protein is Protein SprT-like of Bacillus cereus (strain B4264).